A 363-amino-acid polypeptide reads, in one-letter code: Chemerin-like receptor 1 (363 aa).

Residues 1–39 (MDFEDYNSTYEDSYTDDFDTIVALEEFSPLEGRVVRIFL) lie on the Extracellular side of the membrane. A glycan (N-linked (GlcNAc...) asparagine) is linked at asparagine 7. A helical transmembrane segment spans residues 40 to 60 (VVVYSIICFLGILGNGLVIVI). Residues 61–71 (ATFKMKKTVNT) lie on the Cytoplasmic side of the membrane. Residues 72-92 (VWFLNLAVADFLFNVFLPIHI) form a helical membrane-spanning segment. Residues 93-109 (AYAAMDYHWVFGTAMCK) are Extracellular-facing. A disulfide bond links cysteine 108 and cysteine 185. A helical transmembrane segment spans residues 110 to 130 (ISNFLLIHNMYTSVFLLTVIS). The Cytoplasmic segment spans residues 131-152 (FDRCISVLLPVWSQNHRSIRLA). A helical transmembrane segment spans residues 153 to 173 (YMACVVIWVLAFFLSSPSLVF). The Extracellular segment spans residues 174 to 220 (RDTAHLHGKISCFNNFSLSATSSSSWPTHPQMDTVGFGRQMVVTITR). N-linked (GlcNAc...) asparagine glycosylation occurs at asparagine 188. The chain crosses the membrane as a helical span at residues 221 to 241 (FLCGFLVPVLIISACYFTIVY). Residues 242–256 (KLRRNRLAKTKKPFK) are Cytoplasmic-facing. A helical membrane pass occupies residues 257–277 (IIVTIIITFFLCWCPYHTLYL). Over 278-283 (LELHHR) the chain is Extracellular. Residues 284-304 (AMPGSVFSLGVPLATAIAIAN) traverse the membrane as a helical segment. The Cytoplasmic segment spans residues 305–363 (SCMNPILYVFMGQDFKKFKVALFSRLVNALSEDTGHSSYPSHRSFTKMSSMNERETSML). Serine 335 is subject to Phosphoserine. The disordered stretch occupies residues 337–363 (DTGHSSYPSHRSFTKMSSMNERETSML). Threonine 338 carries the phosphothreonine modification. Residues 340–355 (HSSYPSHRSFTKMSSM) are compositionally biased toward polar residues. Residues serine 345, serine 348, and serine 354 each carry the phosphoserine modification.

It belongs to the chemokine-like receptor (CMKLR) family. Predominantly expressed in spleen and temperately in adipose tissue.

Its subcellular location is the cell membrane. Its function is as follows. Receptor for the chemoattractant adipokine chemerin/RARRES2 and for the omega-3 fatty acid derived molecule resolvin E1. Interaction with RARRES2 initiates activation of G proteins G(i)/G(o) and beta-arrestin pathways inducing cellular responses via second messenger pathways such as intracellular calcium mobilization, phosphorylation of MAP kinases MAPK1/MAPK3 (ERK1/2), TYRO3, MAPK14/P38MAPK and PI3K leading to multifunctional effects, like, reduction of immune responses, enhancing of adipogenesis and angionesis. Resolvin E1 down-regulates cytokine production in macrophages by reducing the activation of MAPK1/3 (ERK1/2) and NF-kappa-B. Positively regulates adipogenesis and adipocyte metabolism. This chain is Chemerin-like receptor 1 (CMLKR1), found in Sus scrofa (Pig).